A 157-amino-acid chain; its full sequence is Glutathione peroxidase homolog BsaA (157 aa).

Cys35 is an active-site residue.

This sequence belongs to the glutathione peroxidase family.

This chain is Glutathione peroxidase homolog BsaA (bsaA), found in Halalkalibacterium halodurans (strain ATCC BAA-125 / DSM 18197 / FERM 7344 / JCM 9153 / C-125) (Bacillus halodurans).